The chain runs to 255 residues: Putative Myb family transcription factor At1g14600 (255 aa).

The HTH myb-type domain occupies 20 to 80 (RSPVPRLRWT…HLQMYRGSRI (61 aa)). A DNA-binding region (H-T-H motif) is located at residues 51 to 76 (PKLVLKIMDVKGLTISHVKSHLQMYR). Residues 80–110 (ITLLGKPEESSSPSSRRRRRQDNEEDHLHDN) form a disordered region.

The protein localises to the nucleus. Putative transcription factor. This chain is Putative Myb family transcription factor At1g14600, found in Arabidopsis thaliana (Mouse-ear cress).